The chain runs to 123 residues: Small ribosomal subunit protein uS13 (123 aa).

Residues 97-123 (PVRGQRTKTNARTRKGPRKTVGVRRKK) form a disordered region.

Belongs to the universal ribosomal protein uS13 family. As to quaternary structure, part of the 30S ribosomal subunit. Forms a loose heterodimer with protein S19. Forms two bridges to the 50S subunit in the 70S ribosome.

Located at the top of the head of the 30S subunit, it contacts several helices of the 16S rRNA. In the 70S ribosome it contacts the 23S rRNA (bridge B1a) and protein L5 of the 50S subunit (bridge B1b), connecting the 2 subunits; these bridges are implicated in subunit movement. Contacts the tRNAs in the A and P-sites. This is Small ribosomal subunit protein uS13 from Pelotomaculum thermopropionicum (strain DSM 13744 / JCM 10971 / SI).